The primary structure comprises 911 residues: DNA ligase 4 (911 aa).

ATP-binding residues include Glu271, Thr272, Lys273, Leu274, Arg278, Glu331, Lys345, Phe367, Glu427, Lys432, Lys449, and Lys451. Lys273 (N6-AMP-lysine intermediate) is an active-site residue. Glu331 contributes to the Mg(2+) binding site. Glu427 contributes to the Mg(2+) binding site. Positions 610–620 (LASKHFYVGGD) are required for catalytic activity. 2 BRCT domains span residues 654-743 (KISN…PHFM) and 808-911 (SPLS…QYLI).

This sequence belongs to the ATP-dependent DNA ligase family. As to quaternary structure, interacts with XRCC4; the LIG4-XRCC4 subcomplex has a 1:2 stoichiometry and XRCC4 is required for LIG4 stability. Component of the core long-range non-homologous end joining (NHEJ) complex (also named DNA-PK complex) composed of PRKDC, LIG4, XRCC4, XRCC6/Ku70, XRCC5/Ku86 and NHEJ1/XLF. Additional component of the NHEJ complex includes PAXX. Following autophosphorylation, PRKDC dissociates from DNA, leading to formation of the short-range NHEJ complex, composed of LIG4, XRCC4, XRCC6/Ku70, XRCC5/Ku86 and NHEJ1/XLF. Interacts with DCLRE1C; the interaction is direct. Interacts with APLF. The cofactor is Mg(2+).

The protein resides in the nucleus. It catalyses the reaction ATP + (deoxyribonucleotide)n-3'-hydroxyl + 5'-phospho-(deoxyribonucleotide)m = (deoxyribonucleotide)n+m + AMP + diphosphate.. Functionally, DNA ligase involved in DNA non-homologous end joining (NHEJ); required for double-strand break (DSB) repair and V(D)J recombination. Catalyzes the NHEJ ligation step of the broken DNA during DSB repair by resealing the DNA breaks after the gap filling is completed. Joins single-strand breaks in a double-stranded polydeoxynucleotide in an ATP-dependent reaction. LIG4 is mechanistically flexible: it can ligate nicks as well as compatible DNA overhangs alone, while in the presence of XRCC4, it can ligate ends with 2-nucleotides (nt) microhomology and 1-nt gaps. Forms a subcomplex with XRCC4; the LIG4-XRCC4 subcomplex is responsible for the NHEJ ligation step and XRCC4 enhances the joining activity of LIG4. Binding of the LIG4-XRCC4 complex to DNA ends is dependent on the assembly of the DNA-dependent protein kinase complex DNA-PK to these DNA ends. LIG4 regulates nuclear localization of XRCC4. The protein is DNA ligase 4 of Pongo abelii (Sumatran orangutan).